The chain runs to 370 residues: MSNPRPNPGIEAIHPYIGGESKLPGVEQVIKLSSNEGAFGPPPAAQQAYLKAVSSLHRYPDGGSHALREAIGRYFGLDPARIVCGVGSDEMIAHLCMAYSNPDSELIMSVHGFSVYEMYGHYAGAKVVKVPEQALTTDVDALLDAITPRTKVVCIANPNNPTGTMLPTAEIARLRASLPSDVLLVLDAAYAEYVDDPDYDPGVKLVDAGDNTVMTRTFSKIFGLGGLRLGWAYAPPAIVDVLNRVRGPFTVNAAVQEAAIGALEEPGWVERSRAHNSAARAKLATALFDIGIPTLPSVTNFLLADFGSEARAGAADRWLRTRGLIVRRVASYGLPAYLRITIGTNEECDLVAEALRAFMAQAPADSDAAS.

Lysine 220 is modified (N6-(pyridoxal phosphate)lysine).

Belongs to the class-II pyridoxal-phosphate-dependent aminotransferase family. Histidinol-phosphate aminotransferase subfamily. As to quaternary structure, homodimer. Pyridoxal 5'-phosphate is required as a cofactor.

The catalysed reaction is L-histidinol phosphate + 2-oxoglutarate = 3-(imidazol-4-yl)-2-oxopropyl phosphate + L-glutamate. It functions in the pathway amino-acid biosynthesis; L-histidine biosynthesis; L-histidine from 5-phospho-alpha-D-ribose 1-diphosphate: step 7/9. The chain is Histidinol-phosphate aminotransferase from Granulibacter bethesdensis (strain ATCC BAA-1260 / CGDNIH1).